The chain runs to 430 residues: Evolutionarily conserved signaling intermediate in Toll pathway, mitochondrial (430 aa).

The transit peptide at 1-48 (MSWVQATLLARGLCRAWGGICRAALPGTSISQVPRQLPRGLHCSAAPH) directs the protein to the mitochondrion. A disordered region spans residues 41–66 (LHCSAAPHSSEQSLVSSPPEPRQRPT). Residues 47 to 56 (PHSSEQSLVS) are compositionally biased toward polar residues. Residue lysine 372 forms a Glycyl lysine isopeptide (Lys-Gly) (interchain with G-Cter in ubiquitin) linkage. A disordered region spans residues 400–430 (LHTSSAGLEEPPPPEDHEEDDSRQRQQQGQS). Residues 411-420 (PPPEDHEEDD) show a composition bias toward acidic residues.

Belongs to the ECSIT family. As to quaternary structure, interacts with MAP3K1, SMAD4 and TRAF6. Interacts with SMAD1 only after BMP4-treatment. Part of the mitochondrial complex I assembly/MCIA complex that comprises at least the core subunits TMEM126B, NDUFAF1, ECSIT and ACAD9 and complement subunits such as COA1 and TMEM186. Interacts with NDUFAF1. Interacts with ACAD9. Interacts with TRIM59. Interacts with TMEM70 and TMEM242. Interacts (when ubiquitinated) with NF-kappa-B subunits RELA and NFKB1. Interacts with RIGI, IFIT1 and MAVS; these interactions promote RLR-mediated type I IFN induction. Interacts with SQSTM1; this interaction inhibits TLR4 signaling via functional regulation of the TRAF6-ECSIT complex. Interacts with cereblon/CRBN; this interaction inhibits the ubiquitination of ECSIT. Ubiquitinated on Lys-372; leading to translocation in the nucleus together with RELA and NFKB1 and expression of NF-kappa-B-dependent genes.

It localises to the cytoplasm. The protein resides in the nucleus. Its subcellular location is the mitochondrion. Its function is as follows. Adapter protein that plays a role in different signaling pathways including TLRs and IL-1 pathways or innate antiviral induction signaling. Plays a role in the activation of NF-kappa-B by forming a signal complex with TRAF6 and TAK1/MAP3K7 to activate TAK1/MAP3K7 leading to activation of IKKs. Once ubiquitinated, interacts with the dissociated RELA and NFKB1 proteins and translocates to the nucleus where it induces NF-kappa-B-dependent gene expression. Plays a role in innate antiviral immune response by bridging the pattern recognition receptors RIGI and MDA5/IFIT1 to the MAVS complex at the mitochondrion. Promotes proteolytic activation of MAP3K1. Involved in the BMP signaling pathway. Required for normal embryonic development. As part of the MCIA complex, involved in the assembly of the mitochondrial complex I. The polypeptide is Evolutionarily conserved signaling intermediate in Toll pathway, mitochondrial (Macaca fascicularis (Crab-eating macaque)).